Consider the following 654-residue polypeptide: U-box domain-containing protein 12 (654 aa).

One can recognise a U-box domain in the interval 255-329; that stretch reads IPPEEFRCPI…AQWCESNGIE (75 aa). Residues 329-352 are disordered; it reads EPPKRPNISQPSSKASSSSSAPDD. Over residues 337 to 349 the composition is skewed to low complexity; it reads SQPSSKASSSSSA. 5 ARM repeats span residues 387 to 427, 430 to 469, 471 to 510, 512 to 551, and 553 to 592; these read NHNR…NLSI, ENKG…SLSV, DENK…NLCI, QGNK…ILSS, and PDGK…HLCS.

The catalysed reaction is S-ubiquitinyl-[E2 ubiquitin-conjugating enzyme]-L-cysteine + [acceptor protein]-L-lysine = [E2 ubiquitin-conjugating enzyme]-L-cysteine + N(6)-ubiquitinyl-[acceptor protein]-L-lysine.. It functions in the pathway protein modification; protein ubiquitination. Functionally, functions as an E3 ubiquitin ligase. This chain is U-box domain-containing protein 12 (PUB12), found in Arabidopsis thaliana (Mouse-ear cress).